Here is a 181-residue protein sequence, read N- to C-terminus: UPF0215 protein AF_1433 (181 aa).

This sequence belongs to the UPF0215 family.

In Archaeoglobus fulgidus (strain ATCC 49558 / DSM 4304 / JCM 9628 / NBRC 100126 / VC-16), this protein is UPF0215 protein AF_1433.